The following is a 229-amino-acid chain: Cytidylate kinase (229 aa).

10-18 (GFSSCGKST) provides a ligand contact to ATP.

It belongs to the cytidylate kinase family. Type 1 subfamily.

The protein localises to the cytoplasm. The enzyme catalyses CMP + ATP = CDP + ADP. It catalyses the reaction dCMP + ATP = dCDP + ADP. The polypeptide is Cytidylate kinase (Bacteroides fragilis (strain ATCC 25285 / DSM 2151 / CCUG 4856 / JCM 11019 / LMG 10263 / NCTC 9343 / Onslow / VPI 2553 / EN-2)).